The following is a 379-amino-acid chain: S-adenosylmethionine:tRNA ribosyltransferase-isomerase (379 aa).

The tract at residues A35–S58 is disordered.

This sequence belongs to the QueA family. In terms of assembly, monomer.

Its subcellular location is the cytoplasm. The catalysed reaction is 7-aminomethyl-7-carbaguanosine(34) in tRNA + S-adenosyl-L-methionine = epoxyqueuosine(34) in tRNA + adenine + L-methionine + 2 H(+). It functions in the pathway tRNA modification; tRNA-queuosine biosynthesis. Transfers and isomerizes the ribose moiety from AdoMet to the 7-aminomethyl group of 7-deazaguanine (preQ1-tRNA) to give epoxyqueuosine (oQ-tRNA). The protein is S-adenosylmethionine:tRNA ribosyltransferase-isomerase of Rhizobium leguminosarum bv. trifolii (strain WSM2304).